The sequence spans 434 residues: MDMNELARRVKEASIVLASAGTELKNRALAQIARSLQDGREEIIRANREDLLRSEKENLPGPLLKRLKFDEAKIQEVIEGIHSLIELEDPVGRTLLSTELDDGLELYKVTCPIGVIGVIFESRPDALVQISTLCLKSGNGVLLKGGSEARETNRVLAAIIAGATHKAGLPPDWIALLETRSDVGEMLKMDKYIDLIIPRGSNEFVRYIMDNSRIPVLGHADGICHLYVDEDADIQMAVKIAVDAKTQYVAVCNAVETLLVHEKIAPAFLPELKKAMDARQVELIGCPRTRAVIPAAPATEEDWRTEYLDLKLSVKVVAGLDEAIGHINTYGSGHTDGIITRSGEKAARFMDYVDSGNVFWNCSTRFSDGFRYGFGAEVGISTSKVHARGPVGLDGLVIYKYRLIGNGHIVGDYAGRLKTFKHRKMNKDYGIVTK.

The protein belongs to the gamma-glutamyl phosphate reductase family.

Its subcellular location is the cytoplasm. The catalysed reaction is L-glutamate 5-semialdehyde + phosphate + NADP(+) = L-glutamyl 5-phosphate + NADPH + H(+). It functions in the pathway amino-acid biosynthesis; L-proline biosynthesis; L-glutamate 5-semialdehyde from L-glutamate: step 2/2. In terms of biological role, catalyzes the NADPH-dependent reduction of L-glutamate 5-phosphate into L-glutamate 5-semialdehyde and phosphate. The product spontaneously undergoes cyclization to form 1-pyrroline-5-carboxylate. This Pelotomaculum thermopropionicum (strain DSM 13744 / JCM 10971 / SI) protein is Gamma-glutamyl phosphate reductase.